The sequence spans 512 residues: 2,3-bisphosphoglycerate-independent phosphoglycerate mutase (512 aa).

Mn(2+) contacts are provided by Asp11 and Ser61. The Phosphoserine intermediate role is filled by Ser61. Substrate contacts are provided by residues His122, 152-153, Arg184, Arg190, 259-262, and Lys332; these read RD and RADR. Asp399, His403, Asp440, His441, and His459 together coordinate Mn(2+).

The protein belongs to the BPG-independent phosphoglycerate mutase family. In terms of assembly, monomer. The cofactor is Mn(2+).

It carries out the reaction (2R)-2-phosphoglycerate = (2R)-3-phosphoglycerate. The protein operates within carbohydrate degradation; glycolysis; pyruvate from D-glyceraldehyde 3-phosphate: step 3/5. Functionally, catalyzes the interconversion of 2-phosphoglycerate and 3-phosphoglycerate. The protein is 2,3-bisphosphoglycerate-independent phosphoglycerate mutase of Francisella tularensis subsp. novicida (strain U112).